The sequence spans 422 residues: UDP-N-acetylglucosamine 1-carboxyvinyltransferase (422 aa).

22-23 (KN) provides a ligand contact to phosphoenolpyruvate. Arg-95 serves as a coordination point for UDP-N-acetyl-alpha-D-glucosamine. Cys-119 (proton donor) is an active-site residue. Position 119 is a 2-(S-cysteinyl)pyruvic acid O-phosphothioketal (Cys-119). Residues 124–128 (RPIDQ), Asp-309, and Val-331 each bind UDP-N-acetyl-alpha-D-glucosamine.

The protein belongs to the EPSP synthase family. MurA subfamily.

The protein localises to the cytoplasm. The enzyme catalyses phosphoenolpyruvate + UDP-N-acetyl-alpha-D-glucosamine = UDP-N-acetyl-3-O-(1-carboxyvinyl)-alpha-D-glucosamine + phosphate. It functions in the pathway cell wall biogenesis; peptidoglycan biosynthesis. Cell wall formation. Adds enolpyruvyl to UDP-N-acetylglucosamine. In Anaeromyxobacter dehalogenans (strain 2CP-1 / ATCC BAA-258), this protein is UDP-N-acetylglucosamine 1-carboxyvinyltransferase.